The primary structure comprises 537 residues: uncharacterized protein (537 aa).

Disordered stretches follow at residues 1 to 33 (MEPG…ILAF), 71 to 98 (SSPP…RKRQ), 197 to 220 (SHNN…SEEK), and 516 to 537 (GRQR…EEQN). Residue S72 is modified to Phosphoserine. A compositionally biased stretch (basic and acidic residues) spans 88 to 98 (SRVDSEARKRQ). The span at 197 to 214 (SHNNMASSNTQSNTQLSE) shows a compositional bias: polar residues. Over residues 516-529 (GRQRSSRYKSHVHK) the composition is skewed to basic residues.

It belongs to the NAD kinase family.

This is an uncharacterized protein from Schizosaccharomyces pombe (strain 972 / ATCC 24843) (Fission yeast).